Here is a 276-residue protein sequence, read N- to C-terminus: Dermonecrotic toxin LlSicTox-alphaIV2iii (276 aa).

His5 is a catalytic residue. Mg(2+)-binding residues include Glu25 and Asp27. The Nucleophile role is filled by His41. Intrachain disulfides connect Cys45-Cys51 and Cys47-Cys193. Position 85 (Asp85) interacts with Mg(2+).

Belongs to the arthropod phospholipase D family. Class II subfamily. It depends on Mg(2+) as a cofactor. Expressed by the venom gland.

It localises to the secreted. The enzyme catalyses an N-(acyl)-sphingosylphosphocholine = an N-(acyl)-sphingosyl-1,3-cyclic phosphate + choline. It catalyses the reaction an N-(acyl)-sphingosylphosphoethanolamine = an N-(acyl)-sphingosyl-1,3-cyclic phosphate + ethanolamine. It carries out the reaction a 1-acyl-sn-glycero-3-phosphocholine = a 1-acyl-sn-glycero-2,3-cyclic phosphate + choline. The catalysed reaction is a 1-acyl-sn-glycero-3-phosphoethanolamine = a 1-acyl-sn-glycero-2,3-cyclic phosphate + ethanolamine. In terms of biological role, dermonecrotic toxins cleave the phosphodiester linkage between the phosphate and headgroup of certain phospholipids (sphingolipid and lysolipid substrates), forming an alcohol (often choline) and a cyclic phosphate. This toxin acts on sphingomyelin (SM). It may also act on ceramide phosphoethanolamine (CPE), lysophosphatidylcholine (LPC) and lysophosphatidylethanolamine (LPE), but not on lysophosphatidylserine (LPS), and lysophosphatidylglycerol (LPG). It acts by transphosphatidylation, releasing exclusively cyclic phosphate products as second products. Induces dermonecrosis, hemolysis, increased vascular permeability, edema, inflammatory response, and platelet aggregation. This chain is Dermonecrotic toxin LlSicTox-alphaIV2iii, found in Loxosceles laeta (South American recluse spider).